The chain runs to 337 residues: Eukaryotic translation initiation factor 3 subunit H (337 aa).

The MPN domain occupies 21 to 153; it reads VQCDGLAVMK…LKAYRLTPQA (133 aa).

Belongs to the eIF-3 subunit H family. Component of the eukaryotic translation initiation factor 3 (eIF-3) complex. The eIF-3 complex interacts with pix. Interacts with mxt.

Its subcellular location is the cytoplasm. Functionally, component of the eukaryotic translation initiation factor 3 (eIF-3) complex, which is involved in protein synthesis of a specialized repertoire of mRNAs and, together with other initiation factors, stimulates binding of mRNA and methionyl-tRNAi to the 40S ribosome. The eIF-3 complex specifically targets and initiates translation of a subset of mRNAs involved in cell proliferation. The protein is Eukaryotic translation initiation factor 3 subunit H of Drosophila pseudoobscura pseudoobscura (Fruit fly).